Consider the following 297-residue polypeptide: GTP cyclohydrolase FolE2 (297 aa).

It belongs to the GTP cyclohydrolase IV family.

It catalyses the reaction GTP + H2O = 7,8-dihydroneopterin 3'-triphosphate + formate + H(+). Its pathway is cofactor biosynthesis; 7,8-dihydroneopterin triphosphate biosynthesis; 7,8-dihydroneopterin triphosphate from GTP: step 1/1. Its function is as follows. Converts GTP to 7,8-dihydroneopterin triphosphate. This is GTP cyclohydrolase FolE2 from Pseudomonas fluorescens (strain ATCC BAA-477 / NRRL B-23932 / Pf-5).